Reading from the N-terminus, the 282-residue chain is uncharacterized protein (282 aa).

The next 4 helical transmembrane spans lie at 130 to 150 (WALL…GFGL), 170 to 190 (STSW…WPSA), 191 to 211 (AAGL…YVIV), and 223 to 243 (ILTH…WRSA). The tract at residues 263-282 (DNASRGRRRGHLWPTDGSAA) is disordered.

Its subcellular location is the cell membrane. This is an uncharacterized protein from Mycobacterium tuberculosis (strain CDC 1551 / Oshkosh).